We begin with the raw amino-acid sequence, 286 residues long: Homoserine kinase (286 aa).

ATP is bound at residue 78–88; the sequence is PLARGLGSSSS.

It belongs to the GHMP kinase family. Homoserine kinase subfamily.

It localises to the cytoplasm. It catalyses the reaction L-homoserine + ATP = O-phospho-L-homoserine + ADP + H(+). The protein operates within amino-acid biosynthesis; L-threonine biosynthesis; L-threonine from L-aspartate: step 4/5. Catalyzes the ATP-dependent phosphorylation of L-homoserine to L-homoserine phosphate. This chain is Homoserine kinase, found in Streptococcus thermophilus (strain CNRZ 1066).